Reading from the N-terminus, the 30-residue chain is Bowman-Birk type proteinase inhibitor 3 (30 aa).

Cystine bridges form between Cys9–Cys24 and Cys14–Cys22.

Functionally, inhibits trypsin (IC(50)=4.90 nM) and, to a lesser extent, alpha-chymotrypsin (IC(50)=1.87 uM). The protein is Bowman-Birk type proteinase inhibitor 3 of Lathyrus sativus (White vetchling).